A 138-amino-acid chain; its full sequence is Cysteine desulfuration protein SufE (138 aa).

C51 functions as the Cysteine persulfide intermediate in the catalytic mechanism.

Belongs to the SufE family. In terms of assembly, homodimer. Interacts with SufS.

It is found in the cytoplasm. Its pathway is cofactor biosynthesis; iron-sulfur cluster biosynthesis. Participates in cysteine desulfuration mediated by SufS. Cysteine desulfuration mobilizes sulfur from L-cysteine to yield L-alanine and constitutes an essential step in sulfur metabolism for biosynthesis of a variety of sulfur-containing biomolecules. Functions as a sulfur acceptor for SufS, by mediating the direct transfer of the sulfur atom from the S-sulfanylcysteine of SufS, an intermediate product of cysteine desulfuration process. This Escherichia coli O157:H7 protein is Cysteine desulfuration protein SufE.